We begin with the raw amino-acid sequence, 151 residues long: UPF0178 protein ESA_02916 (151 aa).

This sequence belongs to the UPF0178 family.

This chain is UPF0178 protein ESA_02916, found in Cronobacter sakazakii (strain ATCC BAA-894) (Enterobacter sakazakii).